The sequence spans 264 residues: Sirohydrochlorin cobaltochelatase (264 aa).

Positions 45, 84, 85, 88, 89, and 92 each coordinate Co-sirohydrochlorin. The Proton acceptor role is filled by histidine 145. 2 residues coordinate Co(2+): histidine 145 and glutamate 175. Co-sirohydrochlorin-binding residues include leucine 202, valine 203, and histidine 207. Residue histidine 207 coordinates Co(2+).

This sequence belongs to the CbiK family. As to quaternary structure, homotrimer.

The enzyme catalyses Co-sirohydrochlorin + 2 H(+) = sirohydrochlorin + Co(2+). It catalyses the reaction Co-precorrin-2 + 3 H(+) = precorrin-2 + Co(2+). The protein operates within cofactor biosynthesis; adenosylcobalamin biosynthesis; cob(II)yrinate a,c-diamide from sirohydrochlorin (anaerobic route): step 1/10. In terms of biological role, cobalt chelatase responsible for the insertion of cobalt during anaerobic cobalamin biosynthesis. Can catalyze the insertion of Co(2+) into either sirohydrochlorin or precorrin-2. It is not clear which is the natural substrate in Salmonella. This is Sirohydrochlorin cobaltochelatase from Salmonella typhimurium (strain LT2 / SGSC1412 / ATCC 700720).